The chain runs to 118 residues: Co-chaperonin GroES (118 aa).

It belongs to the GroES chaperonin family. As to quaternary structure, heptamer of 7 subunits arranged in a ring. Interacts with the chaperonin GroEL.

Its subcellular location is the cytoplasm. In terms of biological role, together with the chaperonin GroEL, plays an essential role in assisting protein folding. The GroEL-GroES system forms a nano-cage that allows encapsulation of the non-native substrate proteins and provides a physical environment optimized to promote and accelerate protein folding. GroES binds to the apical surface of the GroEL ring, thereby capping the opening of the GroEL channel. The sequence is that of Co-chaperonin GroES from Helicobacter acinonychis (strain Sheeba).